We begin with the raw amino-acid sequence, 217 residues long: Putative thymidylate synthase (217 aa).

C139 is an active-site residue.

Belongs to the thymidylate synthase family. Archaeal-type ThyA subfamily. As to quaternary structure, monomer.

The protein resides in the cytoplasm. Its pathway is pyrimidine metabolism; dTTP biosynthesis. May catalyze the biosynthesis of dTMP using an unknown cosubstrate. This Methanosarcina barkeri (strain Fusaro / DSM 804) protein is Putative thymidylate synthase.